The primary structure comprises 638 residues: 1-deoxy-D-xylulose-5-phosphate synthase (638 aa).

Thiamine diphosphate is bound by residues H72 and 113–115 (GHA). D144 lines the Mg(2+) pocket. Thiamine diphosphate contacts are provided by residues 145–146 (GA), N174, Y287, and E370. N174 provides a ligand contact to Mg(2+).

Belongs to the transketolase family. DXPS subfamily. Homodimer. The cofactor is Mg(2+). Thiamine diphosphate serves as cofactor.

It carries out the reaction D-glyceraldehyde 3-phosphate + pyruvate + H(+) = 1-deoxy-D-xylulose 5-phosphate + CO2. It participates in metabolic intermediate biosynthesis; 1-deoxy-D-xylulose 5-phosphate biosynthesis; 1-deoxy-D-xylulose 5-phosphate from D-glyceraldehyde 3-phosphate and pyruvate: step 1/1. In terms of biological role, catalyzes the acyloin condensation reaction between C atoms 2 and 3 of pyruvate and glyceraldehyde 3-phosphate to yield 1-deoxy-D-xylulose-5-phosphate (DXP). This Thermosynechococcus vestitus (strain NIES-2133 / IAM M-273 / BP-1) protein is 1-deoxy-D-xylulose-5-phosphate synthase.